Reading from the N-terminus, the 774-residue chain is Ion-translocating oxidoreductase complex subunit C (774 aa).

2 4Fe-4S ferredoxin-type domains span residues 369–397 and 407–436; these read GEPQ…QQLY and KATT…VQYF. The [4Fe-4S] cluster site is built by Cys377, Cys380, Cys383, Cys387, Cys416, Cys419, Cys422, and Cys426. The segment at 602 to 750 is disordered; sequence KLEQQQANAE…EPEEQIDPRK (149 aa).

It belongs to the 4Fe4S bacterial-type ferredoxin family. RnfC subfamily. The complex is composed of six subunits: RsxA, RsxB, RsxC, RsxD, RsxE and RsxG. [4Fe-4S] cluster serves as cofactor.

It is found in the cell inner membrane. Functionally, part of a membrane-bound complex that couples electron transfer with translocation of ions across the membrane. Required to maintain the reduced state of SoxR. This is Ion-translocating oxidoreductase complex subunit C from Escherichia coli O6:K15:H31 (strain 536 / UPEC).